A 119-amino-acid polypeptide reads, in one-letter code: Large ribosomal subunit protein uL18 (119 aa).

This sequence belongs to the universal ribosomal protein uL18 family. As to quaternary structure, part of the 50S ribosomal subunit; part of the 5S rRNA/L5/L18/L25 subcomplex. Contacts the 5S and 23S rRNAs.

Functionally, this is one of the proteins that bind and probably mediate the attachment of the 5S RNA into the large ribosomal subunit, where it forms part of the central protuberance. In Legionella pneumophila (strain Paris), this protein is Large ribosomal subunit protein uL18.